Here is a 425-residue protein sequence, read N- to C-terminus: MKLIKNGKILKNGILKDTEILIDGKRIKQISSKINASSSNIEVIDAKGNLIAPGFVDVHVHLREPGGEHKETIESGTKAAARGGFTTVCPMPNTRPVPDTVEHVRELRQRISETAQVRVLPYAAITKRQAGTELVDFEKLALEGVFAFTDDGVGVQTASMMYAAMKQAAKVKKPIVAHCEDNSLIYGGAMHKGKRSEELGIPGIPNIAESVQIARDVLLAEATGCHYHVCHVSTKESVRVIRDAKKAGIHVTAEVTPHHLLLTENDVPGDDSNYKMNPPLRSNEDREALLEGLLDGTIDCIATDHAPHAKEEKEQPMTKAPFGIVGSETAFPLLYTHFVRRGNWSLQQLVDYFTIKPATIFNLNYGKLHKDSYADLTIIDLNTEKEIKSEDFLSKADNTPFIGEKVYGNPTLTMLKGEVVFEEEK.

2 residues coordinate Zn(2+): His-59 and His-61. Residues 61-63 (HLR) and Asn-93 each bind substrate. Residues Asp-151, His-178, and His-231 each coordinate Zn(2+). Substrate is bound at residue Asn-277. Asp-304 serves as a coordination point for Zn(2+). The active site involves Asp-304. Residues His-308 and 322–323 (FG) each bind substrate.

Belongs to the metallo-dependent hydrolases superfamily. DHOase family. Class I DHOase subfamily. Zn(2+) serves as cofactor.

It catalyses the reaction (S)-dihydroorotate + H2O = N-carbamoyl-L-aspartate + H(+). Its pathway is pyrimidine metabolism; UMP biosynthesis via de novo pathway; (S)-dihydroorotate from bicarbonate: step 3/3. Catalyzes the reversible cyclization of carbamoyl aspartate to dihydroorotate. The polypeptide is Dihydroorotase (Staphylococcus epidermidis (strain ATCC 35984 / DSM 28319 / BCRC 17069 / CCUG 31568 / BM 3577 / RP62A)).